Consider the following 282-residue polypeptide: Biotin synthase (282 aa).

Residues 1–228 form the Radical SAM core domain; it reads MQEIFLCSIS…NARLMVAGGR (228 aa). 3 residues coordinate [4Fe-4S] cluster: Cys17, Cys21, and Cys24. The [2Fe-2S] cluster site is built by Cys61, Cys96, Cys154, and Arg221.

This sequence belongs to the radical SAM superfamily. Biotin synthase family. In terms of assembly, homodimer. [4Fe-4S] cluster is required as a cofactor. Requires [2Fe-2S] cluster as cofactor.

It carries out the reaction (4R,5S)-dethiobiotin + (sulfur carrier)-SH + 2 reduced [2Fe-2S]-[ferredoxin] + 2 S-adenosyl-L-methionine = (sulfur carrier)-H + biotin + 2 5'-deoxyadenosine + 2 L-methionine + 2 oxidized [2Fe-2S]-[ferredoxin]. The protein operates within cofactor biosynthesis; biotin biosynthesis; biotin from 7,8-diaminononanoate: step 2/2. In terms of biological role, catalyzes the conversion of dethiobiotin (DTB) to biotin by the insertion of a sulfur atom into dethiobiotin via a radical-based mechanism. The sequence is that of Biotin synthase from Helicobacter pylori (strain G27).